The chain runs to 742 residues: uncharacterized protein (742 aa).

Residues 1-102 are disordered; it reads MMLLKRSNDN…FTQTKPNNTD (102 aa). Residues 18–28 are compositionally biased toward low complexity; the sequence is NRQNRQNNRQN. The segment covering 48 to 57 has biased composition (basic and acidic residues); sequence RDSSRMDPVD. Polar residues-rich tracts occupy residues 60 to 69 and 77 to 99; these read TLISFTSGKP and HDTGTNKYSSSKLSETFTQTKPN.

This is an uncharacterized protein from Acanthamoeba polyphaga mimivirus (APMV).